Consider the following 482-residue polypeptide: Probable cytosol aminopeptidase (482 aa).

The Mn(2+) site is built by Lys251 and Asp256. The active site involves Lys263. Mn(2+) contacts are provided by Asp274, Asp333, and Glu335. The active site involves Arg337.

The protein belongs to the peptidase M17 family. Mn(2+) serves as cofactor.

Its subcellular location is the cytoplasm. It catalyses the reaction Release of an N-terminal amino acid, Xaa-|-Yaa-, in which Xaa is preferably Leu, but may be other amino acids including Pro although not Arg or Lys, and Yaa may be Pro. Amino acid amides and methyl esters are also readily hydrolyzed, but rates on arylamides are exceedingly low.. It carries out the reaction Release of an N-terminal amino acid, preferentially leucine, but not glutamic or aspartic acids.. Presumably involved in the processing and regular turnover of intracellular proteins. Catalyzes the removal of unsubstituted N-terminal amino acids from various peptides. In Acinetobacter baylyi (strain ATCC 33305 / BD413 / ADP1), this protein is Probable cytosol aminopeptidase.